The chain runs to 141 residues: Hemoglobin subunit alpha (141 aa).

The 141-residue stretch at 1–141 (VLSAADKSNV…VSTVLTSKYR (141 aa)) folds into the Globin domain. Serine 3 bears the Phosphoserine mark. 2 positions are modified to N6-succinyllysine: lysine 7 and lysine 11. At lysine 16 the chain carries N6-acetyllysine; alternate. Position 16 is an N6-succinyllysine; alternate (lysine 16). A Phosphotyrosine modification is found at tyrosine 24. The residue at position 35 (serine 35) is a Phosphoserine. At lysine 40 the chain carries N6-succinyllysine. Serine 49 carries the post-translational modification Phosphoserine. Residue histidine 58 participates in O2 binding. Heme b is bound at residue histidine 87. Serine 102 carries the post-translational modification Phosphoserine. At threonine 108 the chain carries Phosphothreonine. Position 124 is a phosphoserine (serine 124). Threonine 134 and threonine 137 each carry phosphothreonine. A Phosphoserine modification is found at serine 138.

Belongs to the globin family. As to quaternary structure, heterotetramer of two alpha chains and two beta chains. As to expression, red blood cells.

Involved in oxygen transport from the lung to the various peripheral tissues. Its function is as follows. Hemopressin acts as an antagonist peptide of the cannabinoid receptor CNR1. Hemopressin-binding efficiently blocks cannabinoid receptor CNR1 and subsequent signaling. The polypeptide is Hemoglobin subunit alpha (HBA) (Felis catus (Cat)).